The chain runs to 313 residues: 4-diphosphocytidyl-2-C-methyl-D-erythritol kinase (313 aa).

The active site involves Lys11. 99-109 (PVAAGLAGGST) serves as a coordination point for ATP. Residue Asp141 is part of the active site.

The protein belongs to the GHMP kinase family. IspE subfamily.

It carries out the reaction 4-CDP-2-C-methyl-D-erythritol + ATP = 4-CDP-2-C-methyl-D-erythritol 2-phosphate + ADP + H(+). It participates in isoprenoid biosynthesis; isopentenyl diphosphate biosynthesis via DXP pathway; isopentenyl diphosphate from 1-deoxy-D-xylulose 5-phosphate: step 3/6. Catalyzes the phosphorylation of the position 2 hydroxy group of 4-diphosphocytidyl-2C-methyl-D-erythritol. The sequence is that of 4-diphosphocytidyl-2-C-methyl-D-erythritol kinase from Microcystis aeruginosa (strain NIES-843 / IAM M-2473).